We begin with the raw amino-acid sequence, 274 residues long: Ribosome biogenesis protein UTP30 (274 aa).

This sequence belongs to the universal ribosomal protein uL1 family. Highly divergent. In terms of assembly, component of the 90S pre-ribosomes. Interacts with FAF1.

It is found in the nucleus. It localises to the nucleolus. In terms of biological role, involved in rRNA-processing and ribosome biosynthesis. The sequence is that of Ribosome biogenesis protein UTP30 (UTP30) from Saccharomyces cerevisiae (strain ATCC 204508 / S288c) (Baker's yeast).